The primary structure comprises 841 residues: Tax1-binding protein 1 homolog (841 aa).

Coiled coils occupy residues 173-560 and 612-640; these read TTVL…EKAR and YSIE…KQAG. The interval 419-441 is disordered; sequence MRDEQQQKSNPFAKKDQGADNNR. Positions 431–441 are enriched in basic and acidic residues; the sequence is AKKDQGADNNR. Positions 678 to 759 are disordered; sequence YASQETRDGA…NVNFEQTPDP (82 aa). Residues 741 to 751 show a composition bias toward acidic residues; that stretch reads DEDDDDDDDNV. UBZ1-type zinc fingers lie at residues 779 to 805 and 806 to 832; these read NKKC…VESH and WKVC…VQTH. Zn(2+) contacts are provided by cysteine 782, cysteine 785, histidine 801, histidine 805, cysteine 809, cysteine 812, histidine 828, and histidine 832.

Functionally, may have an anti-apoptotic activity. The polypeptide is Tax1-binding protein 1 homolog (tax1bp1) (Xenopus tropicalis (Western clawed frog)).